We begin with the raw amino-acid sequence, 176 residues long: Oleosin Ara h 14.0103 (176 aa).

Position 2 is an N-acetylalanine; alternate (alanine 2). Helical transmembrane passes span 50 to 70 (IIAV…SGLS), 75 to 95 (IIGL…IVPA), and 96 to 116 (VVTI…GLTG). The interval 156-176 (KTKDAGQEIQTKAQDVKRSSS) is disordered.

The protein belongs to the oleosin family. Expressed in seeds (at protein level).

It localises to the lipid droplet. The protein resides in the membrane. May have a structural role to stabilize the lipid body during desiccation of the seed by preventing coalescence of the oil. Probably interacts with both lipid and phospholipid moieties of lipid bodies. May also provide recognition signals for specific lipase anchorage in lipolysis during seedling growth. The polypeptide is Oleosin Ara h 14.0103 (Arachis hypogaea (Peanut)).